The chain runs to 744 residues: Tripartite motif-containing protein 2 (744 aa).

Position 10 is a phosphoserine (Ser10). The RING-type zinc finger occupies 23 to 64; sequence CSICLERYKNPKVLPCLHTFCERCLQNYIPAHSLTLSCPVCR. Residues 113–154 form a B box-type zinc finger; sequence GKPLSCPNHDGNVMDFYCQSCETAMCRECTEGEHAEHPTVPL. Zn(2+) is bound by residues Cys118, His121, Cys141, and His146. One copy of the Filamin repeat lies at 320 to 421; sequence TTNAVASETV…IRGSPFKLKV (102 aa). Phosphothreonine is present on Thr371. Phosphoserine occurs at positions 375, 424, and 428. A disordered region spans residues 432–462; it reads EGVKRRVKSPGSGHVKQKAVKRPASMYSTGK. NHL repeat units lie at residues 473-516, 520-563, 564-605, 609-652, 656-699, and 700-743; these read IFRV…FSND, KSRF…FSSD, GKFK…FQPN, VTRF…FNQE, MLKF…FDGS, and GSFL…YRYL.

This sequence belongs to the TRIM/RBCC family. In terms of assembly, forms homooligomers. Interacts with TRIM3; this interaction reduces TRIM2 activity. Interacts with myosin V; myosin V may not be a substrate for ubiquitination. Interacts with NEFL. Interacts with phosphorylated BCL2L11. Interacts with SIRPA. In terms of processing, RING-type zinc finger-dependent and UBE2D1-dependent autoubiquitination.

It localises to the cytoplasm. The enzyme catalyses S-ubiquitinyl-[E2 ubiquitin-conjugating enzyme]-L-cysteine + [acceptor protein]-L-lysine = [E2 ubiquitin-conjugating enzyme]-L-cysteine + N(6)-ubiquitinyl-[acceptor protein]-L-lysine.. Its pathway is protein modification; protein ubiquitination. UBE2D1-dependent E3 ubiquitin-protein ligase that mediates the ubiquitination of NEFL and of phosphorylated BCL2L11. Plays a neuroprotective function. May play a role in neuronal rapid ischemic tolerance. Plays a role in antiviral immunity and limits New World arenavirus infection independently of its ubiquitin ligase activity. This Bos taurus (Bovine) protein is Tripartite motif-containing protein 2 (TRIM2).